We begin with the raw amino-acid sequence, 161 residues long: 6,7-dimethyl-8-ribityllumazine synthase (161 aa).

Residues Trp25, 57-59 (AFE), and 80-82 (VVI) each bind 5-amino-6-(D-ribitylamino)uracil. Position 85–86 (85–86 (GT)) interacts with (2S)-2-hydroxy-3-oxobutyl phosphate. The Proton donor role is filled by His88. Phe113 lines the 5-amino-6-(D-ribitylamino)uracil pocket. Residue Arg127 coordinates (2S)-2-hydroxy-3-oxobutyl phosphate.

This sequence belongs to the DMRL synthase family.

It catalyses the reaction (2S)-2-hydroxy-3-oxobutyl phosphate + 5-amino-6-(D-ribitylamino)uracil = 6,7-dimethyl-8-(1-D-ribityl)lumazine + phosphate + 2 H2O + H(+). Its pathway is cofactor biosynthesis; riboflavin biosynthesis; riboflavin from 2-hydroxy-3-oxobutyl phosphate and 5-amino-6-(D-ribitylamino)uracil: step 1/2. Catalyzes the formation of 6,7-dimethyl-8-ribityllumazine by condensation of 5-amino-6-(D-ribitylamino)uracil with 3,4-dihydroxy-2-butanone 4-phosphate. This is the penultimate step in the biosynthesis of riboflavin. This chain is 6,7-dimethyl-8-ribityllumazine synthase, found in Kineococcus radiotolerans (strain ATCC BAA-149 / DSM 14245 / SRS30216).